Consider the following 325-residue polypeptide: Holliday junction branch migration complex subunit RuvB (325 aa).

Positions 1 to 181 are large ATPase domain (RuvB-L); sequence MENRLINPVE…FGIVQRLEFY (181 aa). ATP is bound by residues I20, R21, G62, K65, T66, T67, 128–130, R171, Y181, and R218; that span reads EDF. T66 is a Mg(2+) binding site. The tract at residues 182–252 is small ATPAse domain (RuvB-S); that stretch reads NIEDLTTIVS…IADSALDMLA (71 aa). The segment at 255–325 is head domain (RuvB-H); that stretch reads RRGLDHLDRR…VLTQMAIDQL (71 aa). Positions 291, 310, and 315 each coordinate DNA.

Belongs to the RuvB family. As to quaternary structure, homohexamer. Forms an RuvA(8)-RuvB(12)-Holliday junction (HJ) complex. HJ DNA is sandwiched between 2 RuvA tetramers; dsDNA enters through RuvA and exits via RuvB. An RuvB hexamer assembles on each DNA strand where it exits the tetramer. Each RuvB hexamer is contacted by two RuvA subunits (via domain III) on 2 adjacent RuvB subunits; this complex drives branch migration. In the full resolvosome a probable DNA-RuvA(4)-RuvB(12)-RuvC(2) complex forms which resolves the HJ.

The protein resides in the cytoplasm. It catalyses the reaction ATP + H2O = ADP + phosphate + H(+). In terms of biological role, the RuvA-RuvB-RuvC complex processes Holliday junction (HJ) DNA during genetic recombination and DNA repair, while the RuvA-RuvB complex plays an important role in the rescue of blocked DNA replication forks via replication fork reversal (RFR). RuvA specifically binds to HJ cruciform DNA, conferring on it an open structure. The RuvB hexamer acts as an ATP-dependent pump, pulling dsDNA into and through the RuvAB complex. RuvB forms 2 homohexamers on either side of HJ DNA bound by 1 or 2 RuvA tetramers; 4 subunits per hexamer contact DNA at a time. Coordinated motions by a converter formed by DNA-disengaged RuvB subunits stimulates ATP hydrolysis and nucleotide exchange. Immobilization of the converter enables RuvB to convert the ATP-contained energy into a lever motion, pulling 2 nucleotides of DNA out of the RuvA tetramer per ATP hydrolyzed, thus driving DNA branch migration. The RuvB motors rotate together with the DNA substrate, which together with the progressing nucleotide cycle form the mechanistic basis for DNA recombination by continuous HJ branch migration. Branch migration allows RuvC to scan DNA until it finds its consensus sequence, where it cleaves and resolves cruciform DNA. The polypeptide is Holliday junction branch migration complex subunit RuvB (Psychrobacter sp. (strain PRwf-1)).